The chain runs to 344 residues: Photosystem II protein D1 (344 aa).

N-acetylthreonine is present on Thr2. Thr2 bears the Phosphothreonine mark. Helical transmembrane passes span 29 to 46 (YIGW…TATS), 118 to 133 (HFFL…EWEL), and 142 to 156 (WIAV…AATA). His118 lines the chlorophyll a pocket. Tyr126 contacts pheophytin a. Asp170 and Glu189 together coordinate [CaMn4O5] cluster. A helical transmembrane segment spans residues 197-218 (FHMLGVAGVFGGSLFSAMHGSL). His198 provides a ligand contact to chlorophyll a. A quinone-binding positions include His215 and 264-265 (SF). Fe cation is bound at residue His215. A Fe cation-binding site is contributed by His272. Residues 274-288 (FLAAWPVIGIWFTAL) form a helical membrane-spanning segment. Positions 332, 333, 342, and 344 each coordinate [CaMn4O5] cluster.

Belongs to the reaction center PufL/M/PsbA/D family. PSII is composed of 1 copy each of membrane proteins PsbA, PsbB, PsbC, PsbD, PsbE, PsbF, PsbH, PsbI, PsbJ, PsbK, PsbL, PsbM, PsbT, PsbX, PsbY, PsbZ, Psb30/Ycf12, at least 3 peripheral proteins of the oxygen-evolving complex and a large number of cofactors. It forms dimeric complexes. The D1/D2 heterodimer binds P680, chlorophylls that are the primary electron donor of PSII, and subsequent electron acceptors. It shares a non-heme iron and each subunit binds pheophytin, quinone, additional chlorophylls, carotenoids and lipids. D1 provides most of the ligands for the Mn4-Ca-O5 cluster of the oxygen-evolving complex (OEC). There is also a Cl(-1) ion associated with D1 and D2, which is required for oxygen evolution. The PSII complex binds additional chlorophylls, carotenoids and specific lipids. serves as cofactor. Post-translationally, tyr-161 forms a radical intermediate that is referred to as redox-active TyrZ, YZ or Y-Z.

Its subcellular location is the plastid. The protein localises to the chloroplast thylakoid membrane. The enzyme catalyses 2 a plastoquinone + 4 hnu + 2 H2O = 2 a plastoquinol + O2. Its function is as follows. Photosystem II (PSII) is a light-driven water:plastoquinone oxidoreductase that uses light energy to abstract electrons from H(2)O, generating O(2) and a proton gradient subsequently used for ATP formation. It consists of a core antenna complex that captures photons, and an electron transfer chain that converts photonic excitation into a charge separation. The D1/D2 (PsbA/PsbD) reaction center heterodimer binds P680, the primary electron donor of PSII as well as several subsequent electron acceptors. The polypeptide is Photosystem II protein D1 (Pleurastrum terricola (Filamentous green alga)).